The primary structure comprises 464 residues: Siroheme synthase (464 aa).

The tract at residues 1-203 (MKYLPLFHNL…GQGAEAERLL (203 aa)) is precorrin-2 dehydrogenase /sirohydrochlorin ferrochelatase. Residues 22–23 (EI) and 43–44 (PE) contribute to the NAD(+) site. At serine 128 the chain carries Phosphoserine. The uroporphyrinogen-III C-methyltransferase stretch occupies residues 216-464 (GEVYLVGAGP…AWFEGAQGQI (249 aa)). An S-adenosyl-L-methionine-binding site is contributed by proline 225. Aspartate 248 acts as the Proton acceptor in catalysis. The Proton donor role is filled by lysine 270. S-adenosyl-L-methionine contacts are provided by residues 301–303 (GGD), isoleucine 306, 331–332 (TA), methionine 383, and glycine 412.

This sequence in the N-terminal section; belongs to the precorrin-2 dehydrogenase / sirohydrochlorin ferrochelatase family. It in the C-terminal section; belongs to the precorrin methyltransferase family.

The catalysed reaction is uroporphyrinogen III + 2 S-adenosyl-L-methionine = precorrin-2 + 2 S-adenosyl-L-homocysteine + H(+). It carries out the reaction precorrin-2 + NAD(+) = sirohydrochlorin + NADH + 2 H(+). The enzyme catalyses siroheme + 2 H(+) = sirohydrochlorin + Fe(2+). The protein operates within cofactor biosynthesis; adenosylcobalamin biosynthesis; precorrin-2 from uroporphyrinogen III: step 1/1. It functions in the pathway cofactor biosynthesis; adenosylcobalamin biosynthesis; sirohydrochlorin from precorrin-2: step 1/1. It participates in porphyrin-containing compound metabolism; siroheme biosynthesis; precorrin-2 from uroporphyrinogen III: step 1/1. Its pathway is porphyrin-containing compound metabolism; siroheme biosynthesis; siroheme from sirohydrochlorin: step 1/1. The protein operates within porphyrin-containing compound metabolism; siroheme biosynthesis; sirohydrochlorin from precorrin-2: step 1/1. Functionally, multifunctional enzyme that catalyzes the SAM-dependent methylations of uroporphyrinogen III at position C-2 and C-7 to form precorrin-2 via precorrin-1. Then it catalyzes the NAD-dependent ring dehydrogenation of precorrin-2 to yield sirohydrochlorin. Finally, it catalyzes the ferrochelation of sirohydrochlorin to yield siroheme. The polypeptide is Siroheme synthase (Pseudomonas fluorescens (strain Pf0-1)).